A 554-amino-acid polypeptide reads, in one-letter code: Aspartyl/glutamyl-tRNA(Asn/Gln) amidotransferase subunit B (554 aa).

The tract at residues 491–554 (AEQPTAPPPE…TPVSHQDAHA (64 aa)) is disordered. Residues 502–540 (ESAAETPEAPPAVEDAPPEAPTEAITAEAGSAEAITAAS) show a composition bias toward low complexity.

It belongs to the GatB/GatE family. GatB subfamily. In terms of assembly, heterotrimer of A, B and C subunits.

The catalysed reaction is L-glutamyl-tRNA(Gln) + L-glutamine + ATP + H2O = L-glutaminyl-tRNA(Gln) + L-glutamate + ADP + phosphate + H(+). It carries out the reaction L-aspartyl-tRNA(Asn) + L-glutamine + ATP + H2O = L-asparaginyl-tRNA(Asn) + L-glutamate + ADP + phosphate + 2 H(+). In terms of biological role, allows the formation of correctly charged Asn-tRNA(Asn) or Gln-tRNA(Gln) through the transamidation of misacylated Asp-tRNA(Asn) or Glu-tRNA(Gln) in organisms which lack either or both of asparaginyl-tRNA or glutaminyl-tRNA synthetases. The reaction takes place in the presence of glutamine and ATP through an activated phospho-Asp-tRNA(Asn) or phospho-Glu-tRNA(Gln). The chain is Aspartyl/glutamyl-tRNA(Asn/Gln) amidotransferase subunit B from Gloeobacter violaceus (strain ATCC 29082 / PCC 7421).